Here is a 283-residue protein sequence, read N- to C-terminus: 2-hydroxy-6-oxononadienedioate/2-hydroxy-6-oxononatrienedioate hydrolase (283 aa).

Residues 35–269 enclose the AB hydrolase-1 domain; sequence VVVMFHGSGP…KCGHWAQWEH (235 aa). His-263 (proton acceptor) is an active-site residue.

The protein belongs to the AB hydrolase superfamily. MhpC family. Homodimer.

The enzyme catalyses (2Z,4E)-2-hydroxy-6-oxonona-2,4-dienedioate + H2O = (2Z)-2-hydroxypenta-2,4-dienoate + succinate + H(+). It carries out the reaction (2Z,4E,7E)-2-hydroxy-6-oxonona-2,4,7-trienedioate + H2O = (2Z)-2-hydroxypenta-2,4-dienoate + fumarate + H(+). It functions in the pathway aromatic compound metabolism; 3-phenylpropanoate degradation. In terms of biological role, catalyzes the cleavage of the C5-C6 bond of 2-hydroxy-6-oxononadienedioate and 2-hydroxy-6-oxononatrienedioate, a dienol ring fission product of the bacterial meta-cleavage pathway for degradation of phenylpropionic acid. This is 2-hydroxy-6-oxononadienedioate/2-hydroxy-6-oxononatrienedioate hydrolase from Pseudomonas sp.